The primary structure comprises 474 residues: PRAME family member 7 (474 aa).

Residues 97–122 (QSKLQVLDLRNVDENFCDIFSGATAS) form an LRR 1; degenerate repeat. The stretch at 177-201 (HVCCKELQVFGMPIHSIIEVLNMVE) is one LRR 2; degenerate repeat. The LRR 3; degenerate repeat unit spans residues 202–228 (LDCIQEVEVCCPWELSTLVKFAPYLGQ). The stretch at 229-264 (MRNLRKLVLFNIRASACIPPDNKGQFIARFTSQFLK) is one LRR 4; degenerate repeat. 5 LRR repeats span residues 265–290 (LDYFQNLSMHSVSFLEGHLDQLLRCL), 291–322 (QASLEMVVMTDCLLSESDLKHLSWCPSIRQLK), 323–341 (ELDLRGVTLTHFSPEPLTG), 347–374 (VATLQTLDLEDCGIMDSQLSAILPVLSR), and 375–399 (CSQLSTFSFCGNLISMAALENLLRH).

It belongs to the PRAME family.

This chain is PRAME family member 7, found in Homo sapiens (Human).